The following is a 150-amino-acid chain: MKPKNWLILKRKVRFGDCDSAGVIHFHNLLRWAHESWEESIDIYGIPHQDIFPDSNSHKNQIICPIVNCEANFLSPIKIGDLLSIKIFPKKINNHLFQVNTFFLKDEINVAEGKIIHCSLDVDSKLKVKLPDQLERWIEASNINTNLKEC.

Asp-19 is an active-site residue.

Belongs to the 4-hydroxybenzoyl-CoA thioesterase family. DHNA-CoA hydrolase subfamily.

It carries out the reaction 1,4-dihydroxy-2-naphthoyl-CoA + H2O = 1,4-dihydroxy-2-naphthoate + CoA + H(+). It participates in cofactor biosynthesis; phylloquinone biosynthesis. It functions in the pathway quinol/quinone metabolism; 1,4-dihydroxy-2-naphthoate biosynthesis; 1,4-dihydroxy-2-naphthoate from chorismate: step 7/7. In terms of biological role, catalyzes the hydrolysis of 1,4-dihydroxy-2-naphthoyl-CoA (DHNA-CoA) to 1,4-dihydroxy-2-naphthoate (DHNA), a reaction involved in phylloquinone (vitamin K1) biosynthesis. The protein is 1,4-dihydroxy-2-naphthoyl-CoA hydrolase of Prochlorococcus marinus subsp. pastoris (strain CCMP1986 / NIES-2087 / MED4).